A 986-amino-acid chain; its full sequence is Bifunctional glutamine synthetase adenylyltransferase/adenylyl-removing enzyme (986 aa).

The interval 1–471 (MAEAIERSLS…RYAQLFEQEA (471 aa)) is adenylyl removase. Positions 475–986 (TETGNLVFTG…RIFQGVVAAA (512 aa)) are adenylyl transferase.

This sequence belongs to the GlnE family. Requires Mg(2+) as cofactor.

The enzyme catalyses [glutamine synthetase]-O(4)-(5'-adenylyl)-L-tyrosine + phosphate = [glutamine synthetase]-L-tyrosine + ADP. The catalysed reaction is [glutamine synthetase]-L-tyrosine + ATP = [glutamine synthetase]-O(4)-(5'-adenylyl)-L-tyrosine + diphosphate. Involved in the regulation of glutamine synthetase GlnA, a key enzyme in the process to assimilate ammonia. When cellular nitrogen levels are high, the C-terminal adenylyl transferase (AT) inactivates GlnA by covalent transfer of an adenylyl group from ATP to specific tyrosine residue of GlnA, thus reducing its activity. Conversely, when nitrogen levels are low, the N-terminal adenylyl removase (AR) activates GlnA by removing the adenylyl group by phosphorolysis, increasing its activity. The regulatory region of GlnE binds the signal transduction protein PII (GlnB) which indicates the nitrogen status of the cell. This chain is Bifunctional glutamine synthetase adenylyltransferase/adenylyl-removing enzyme, found in Rhizobium meliloti (strain 1021) (Ensifer meliloti).